Consider the following 258-residue polypeptide: Aspartate/glutamate leucyltransferase (258 aa).

The protein belongs to the R-transferase family. Bpt subfamily.

It localises to the cytoplasm. The catalysed reaction is N-terminal L-glutamyl-[protein] + L-leucyl-tRNA(Leu) = N-terminal L-leucyl-L-glutamyl-[protein] + tRNA(Leu) + H(+). The enzyme catalyses N-terminal L-aspartyl-[protein] + L-leucyl-tRNA(Leu) = N-terminal L-leucyl-L-aspartyl-[protein] + tRNA(Leu) + H(+). Functionally, functions in the N-end rule pathway of protein degradation where it conjugates Leu from its aminoacyl-tRNA to the N-termini of proteins containing an N-terminal aspartate or glutamate. In Rhodopseudomonas palustris (strain BisB18), this protein is Aspartate/glutamate leucyltransferase.